A 309-amino-acid chain; its full sequence is tRNA uridine(34) hydroxylase (309 aa).

The 95-residue stretch at 130 to 224 folds into the Rhodanese domain; the sequence is SDPDTIVIDT…YLEEVPQEES (95 aa). Catalysis depends on cysteine 184, which acts as the Cysteine persulfide intermediate.

The protein belongs to the TrhO family.

The catalysed reaction is uridine(34) in tRNA + AH2 + O2 = 5-hydroxyuridine(34) in tRNA + A + H2O. Its function is as follows. Catalyzes oxygen-dependent 5-hydroxyuridine (ho5U) modification at position 34 in tRNAs. The chain is tRNA uridine(34) hydroxylase from Rhizobium johnstonii (strain DSM 114642 / LMG 32736 / 3841) (Rhizobium leguminosarum bv. viciae).